The sequence spans 426 residues: Putative 3-oxoacyl-[acyl-carrier-protein] synthase, mitochondrial (426 aa).

Residues 1 to 18 (MKRVVITGLGAVTPLGNG) constitute a mitochondrion transit peptide. Residues 19 to 423 (VKTNWRNLIQ…GTNASLCFKK (405 aa)) form the Ketosynthase family 3 (KS3) domain. Catalysis depends on for beta-ketoacyl synthase activity residues Cys170, His311, and His351.

This sequence belongs to the thiolase-like superfamily. Beta-ketoacyl-ACP synthases family.

Its subcellular location is the mitochondrion. It catalyses the reaction a fatty acyl-[ACP] + malonyl-[ACP] + H(+) = a 3-oxoacyl-[ACP] + holo-[ACP] + CO2. It carries out the reaction butanoyl-[ACP] + malonyl-[ACP] + H(+) = 3-oxohexanoyl-[ACP] + holo-[ACP] + CO2. The catalysed reaction is hexanoyl-[ACP] + malonyl-[ACP] + H(+) = 3-oxooctanoyl-[ACP] + holo-[ACP] + CO2. The enzyme catalyses octanoyl-[ACP] + malonyl-[ACP] + H(+) = 3-oxodecanoyl-[ACP] + holo-[ACP] + CO2. It catalyses the reaction decanoyl-[ACP] + malonyl-[ACP] + H(+) = 3-oxododecanoyl-[ACP] + holo-[ACP] + CO2. It carries out the reaction dodecanoyl-[ACP] + malonyl-[ACP] + H(+) = 3-oxotetradecanoyl-[ACP] + holo-[ACP] + CO2. The catalysed reaction is tetradecanoyl-[ACP] + malonyl-[ACP] + H(+) = 3-oxohexadecanoyl-[ACP] + holo-[ACP] + CO2. It functions in the pathway lipid metabolism; fatty acid biosynthesis. Functionally, may play a role in the biosynthesis of lipoic acid as well as longer chain fatty acids required for optimal mitochondrial function. The sequence is that of Putative 3-oxoacyl-[acyl-carrier-protein] synthase, mitochondrial from Schizosaccharomyces pombe (strain 972 / ATCC 24843) (Fission yeast).